Consider the following 501-residue polypeptide: 2-phosphoxylose phosphatase 1 (501 aa).

Over 1-6 (MLLRNR) the chain is Cytoplasmic. Residues 7–27 (FLLLLALAGLLAFLSLSLQFF) form a helical; Signal-anchor for type II membrane protein membrane-spanning segment. Topologically, residues 28–501 (SRWLPVSLQL…YYDACHQRLF (474 aa)) are lumenal. The active-site Nucleophile is His120. Asn328 and Asn377 each carry an N-linked (GlcNAc...) asparagine glycan. Asp402 acts as the Proton donor in catalysis. A glycan (N-linked (GlcNAc...) asparagine) is linked at Asn488.

The protein belongs to the histidine acid phosphatase family.

It is found in the golgi apparatus membrane. The catalysed reaction is 3-O-[beta-D-GlcA-(1-&gt;3)-beta-D-Gal-(1-&gt;3)-beta-D-Gal-(1-&gt;4)-beta-D-2-O-P-Xyl]-L-seryl-[protein] + H2O = 3-O-(beta-D-GlcA-(1-&gt;3)-beta-D-Gal-(1-&gt;3)-beta-D-Gal-(1-&gt;4)-beta-D-Xyl)-L-seryl-[protein] + phosphate. Functionally, responsible for the 2-O-dephosphorylation of xylose in the glycosaminoglycan-protein linkage region of proteoglycans thereby regulating the amount of mature glycosaminoglycan (GAG) chains. Sulfated glycosaminoglycans (GAGs), including heparan sulfate and chondroitin sulfate, are synthesized on the so-called common GAG-protein linkage region (GlcUAbeta1-3Galbeta1-3Galbeta1-4Xylbeta1-O-Ser) of core proteins, which is formed by the stepwise addition of monosaccharide residues by the respective specific glycosyltransferases. Xylose 2-O-dephosphorylation during completion of linkage region formation is a prerequisite for the initiation and efficient elongation of the repeating disaccharide region of GAG chains. This Xenopus tropicalis (Western clawed frog) protein is 2-phosphoxylose phosphatase 1.